A 338-amino-acid chain; its full sequence is Tetraacyldisaccharide 4'-kinase (338 aa).

H51–T58 is a binding site for ATP.

This sequence belongs to the LpxK family.

The enzyme catalyses a lipid A disaccharide + ATP = a lipid IVA + ADP + H(+). It functions in the pathway glycolipid biosynthesis; lipid IV(A) biosynthesis; lipid IV(A) from (3R)-3-hydroxytetradecanoyl-[acyl-carrier-protein] and UDP-N-acetyl-alpha-D-glucosamine: step 6/6. Functionally, transfers the gamma-phosphate of ATP to the 4'-position of a tetraacyldisaccharide 1-phosphate intermediate (termed DS-1-P) to form tetraacyldisaccharide 1,4'-bis-phosphate (lipid IVA). This Bradyrhizobium diazoefficiens (strain JCM 10833 / BCRC 13528 / IAM 13628 / NBRC 14792 / USDA 110) protein is Tetraacyldisaccharide 4'-kinase.